The sequence spans 697 residues: Potassium-transporting ATPase ATP-binding subunit (697 aa).

Transmembrane regions (helical) follow at residues 55-75, 79-99, 245-265, and 271-291; these read PIMFVVEIGFIITFILSFLPS, SIPGWFNITVSLILLFTVLFA, LTLIFLIVVVTLPIFTNYLGF, and VLVALLVCLIPTTIGGLLSAI. Asp-324 functions as the 4-aspartylphosphate intermediate in the catalytic mechanism. ATP-binding positions include Asp-361, Glu-365, 393 to 400, and Lys-412; that span reads FKAETRMS. Asp-535 and Asp-539 together coordinate Mg(2+). Transmembrane regions (helical) follow at residues 605–625, 633–653, and 677–697; these read FAIIPAMFTLAIPQMEALNIM, AILSALIFNAVIIPLLIPLAM, and GGVIVPFIGIKVIDMIVGLFI.

Belongs to the cation transport ATPase (P-type) (TC 3.A.3) family. Type IA subfamily. In terms of assembly, the system is composed of three essential subunits: KdpA, KdpB and KdpC.

Its subcellular location is the cell membrane. It catalyses the reaction K(+)(out) + ATP + H2O = K(+)(in) + ADP + phosphate + H(+). Its function is as follows. Part of the high-affinity ATP-driven potassium transport (or Kdp) system, which catalyzes the hydrolysis of ATP coupled with the electrogenic transport of potassium into the cytoplasm. This subunit is responsible for energy coupling to the transport system and for the release of the potassium ions to the cytoplasm. This Bacillus cereus (strain B4264) protein is Potassium-transporting ATPase ATP-binding subunit.